The chain runs to 646 residues: Microtubule-associated protein 9 (646 aa).

Ser-2 is modified (N-acetylserine). The residue at position 12 (Tyr-12) is a Phosphotyrosine. Disordered regions lie at residues Asp-75–Glu-226, Ser-242–Asp-418, Arg-491–Ala-511, Arg-531–Asp-554, Leu-570–Gln-597, and Lys-609–Phe-646. Composition is skewed to polar residues over residues Ala-105–Asp-119 and Arg-157–Gly-167. Over residues Ser-188–Ile-204 the composition is skewed to basic and acidic residues. Composition is skewed to polar residues over residues Ser-205 to Leu-222, Leu-280 to Leu-291, and Pro-330 to Thr-340. The span at Glu-346 to Thr-357 shows a compositional bias: basic and acidic residues. Positions Thr-386 to Tyr-398 are enriched in polar residues. The span at Leu-405 to Asp-418 shows a compositional bias: basic and acidic residues. Residues Met-442–Lys-596 adopt a coiled-coil conformation. A compositionally biased stretch (polar residues) spans Pro-637–Phe-646.

As to quaternary structure, binds to purified microtubules via its C-terminus.

The protein resides in the cytoplasm. It localises to the cytoskeleton. It is found in the spindle. Its function is as follows. Involved in organization of the bipolar mitotic spindle. Required for bipolar spindle assembly, mitosis progression and cytokinesis. May act by stabilizing interphase microtubules. The polypeptide is Microtubule-associated protein 9 (Map9) (Mus musculus (Mouse)).